The sequence spans 667 residues: Transketolase 2 (667 aa).

His25 serves as a coordination point for substrate. Residues His65 and 113 to 115 contribute to the thiamine diphosphate site; that span reads GPL. Asp154 contacts Mg(2+). Gly155 and Asn184 together coordinate thiamine diphosphate. 2 residues coordinate Mg(2+): Asn184 and Ile186. His260 is a binding site for substrate. His260 contacts thiamine diphosphate. The residue at position 342 (Lys342) is an N6-acetyllysine. Substrate-binding residues include Arg357 and Ser384. The active-site Proton donor is Glu410. Residue Phe436 coordinates thiamine diphosphate. Substrate-binding residues include His460, Asp468, and Arg519.

The protein belongs to the transketolase family. As to quaternary structure, homodimer. The cofactor is Mg(2+). Requires Ca(2+) as cofactor. It depends on Mn(2+) as a cofactor. Co(2+) serves as cofactor. Thiamine diphosphate is required as a cofactor.

It catalyses the reaction D-sedoheptulose 7-phosphate + D-glyceraldehyde 3-phosphate = aldehydo-D-ribose 5-phosphate + D-xylulose 5-phosphate. Its function is as follows. Catalyzes the reversible transfer of a two-carbon ketol group from sedoheptulose-7-phosphate to glyceraldehyde-3-phosphate, producing xylulose-5-phosphate and ribose-5-phosphate. Catalyzes the transfer of a two-carbon ketol group from a ketose donor to an aldose acceptor, via a covalent intermediate with the cofactor thiamine pyrophosphate. In Escherichia coli (strain K12), this protein is Transketolase 2.